The sequence spans 605 residues: Capsid scaffolding protein (605 aa).

Residues histidine 48, serine 116, and histidine 139 each act as charge relay system in the active site. The interval 235-274 is disordered; the sequence is ASDAPDLQKPDKALQSPPPASTDPATMLSGNAGEGATACG. An interaction with pAP region spans residues 281–300; sequence QDLISVPRNTFMTLLQTNLD. Disordered regions lie at residues 403-431 and 489-588; these read DYVP…FPGE and PHQS…KSVS. A Nuclear localization signal motif is present at residues 410–416; that stretch reads RSNKRKR. Positions 568–579 are enriched in polar residues; that stretch reads ASASGVAQSKEP. Residues 585–605 are interaction with major capsid protein; it reads KSVSAHLKSIFCEELLNKRVA.

It belongs to the herpesviridae capsid scaffolding protein family. In terms of assembly, homomultimer. Interacts with major capsid protein. Exists in a monomer-dimer equilibrium with the dimer being the active species. Post-translationally, capsid scaffolding protein is cleaved by assemblin after formation of the spherical procapsid. As a result, the capsid obtains its mature, icosahedral shape. Cleavages occur at two or more sites: release (R-site) and maturation (M-site).

The protein resides in the host cytoplasm. It is found in the host nucleus. The enzyme catalyses Cleaves -Ala-|-Ser- and -Ala-|-Ala- bonds in the scaffold protein.. Functionally, acts as a scaffold protein by binding major capsid protein in the cytoplasm, inducing the nuclear localization of both proteins. Multimerizes in the nucleus such as major capsid protein forms the icosahedral T=16 capsid. Autocatalytic cleavage releases the assembly protein, and subsequently abolishes interaction with major capsid protein. Cleavages products are evicted from the capsid before or during DNA packaging. Protease that plays an essential role in virion assembly within the nucleus. Catalyzes the cleavage of the assembly protein after formation of the spherical procapsid. By that cleavage, the capsid matures and gains its icosahedral shape. The cleavage sites seem to include -Ala-Ser-, -Ala-Ala-, as well as Ala-Thr bonds. Assemblin and cleavages products are evicted from the capsid before or during DNA packaging. Its function is as follows. Plays a major role in capsid assembly. Acts as a scaffold protein by binding major capsid protein. Multimerizes in the nucleus such as major capsid protein forms the icosahedral T=16 capsid. Cleaved by assemblin after capsid completion. The cleavages products are evicted from the capsid before or during DNA packaging. This is Capsid scaffolding protein from Homo sapiens (Human).